The chain runs to 326 residues: MRPLMLQGHERSITQIKYNREGDLLFSCSKDQKPNVWYSLNGERLGTYDGHQGAVWCLDVDWESRKLITGAGDMTTKIWDVEYGTVIASIPTKSSVRTSNFSFSGNQAAYSTDKAMGQSCELFLIDVRNADSSLSEQEPTLRIPMTESKITSMLWGPLDETIITGHDNGNIAIWDIRKGQKVVDSGTDHSAGINDMQLSKDGTMFVTASKDTTAKLFDSESLMCLKTYKTERPVNSAAISPIMDHVVLGGGQDAMEVTTTSTKAGKFDSRFFHLIYEEEFARLKGHFGPINSLAFHPDGKSYASGGEDGFVRVQTFDSTYFENIFE.

5 WD repeats span residues Gly-8–Thr-47, Gly-50–Ser-89, Met-145–Asp-184, Asp-188–Thr-227, and Gly-285–Glu-326.

It belongs to the eIF-3 subunit I family. Component of the eukaryotic translation initiation factor 3 (eIF-3) complex. The eIF-3 complex interacts with pix.

It is found in the cytoplasm. Component of the eukaryotic translation initiation factor 3 (eIF-3) complex, which is involved in protein synthesis of a specialized repertoire of mRNAs and, together with other initiation factors, stimulates binding of mRNA and methionyl-tRNAi to the 40S ribosome. The eIF-3 complex specifically targets and initiates translation of a subset of mRNAs involved in cell proliferation. This is Eukaryotic translation initiation factor 3 subunit I from Drosophila erecta (Fruit fly).